Here is a 157-residue protein sequence, read N- to C-terminus: Putative pre-16S rRNA nuclease (157 aa).

Belongs to the YqgF nuclease family.

It localises to the cytoplasm. Functionally, could be a nuclease involved in processing of the 5'-end of pre-16S rRNA. This chain is Putative pre-16S rRNA nuclease, found in Parasynechococcus marenigrum (strain WH8102).